The primary structure comprises 166 residues: Lipoprotein signal peptidase (166 aa).

A run of 4 helical transmembrane segments spans residues 9-29 (ASGA…FDQL), 45-65 (ALTS…FGFL), 71-91 (WQRW…CFLL), and 100-120 (FSVS…DRLV). Active-site residues include Asp-126 and Asp-144. The chain crosses the membrane as a helical span at residues 135-155 (WHFPAFNLADSAITVGAVLLI).

It belongs to the peptidase A8 family.

The protein localises to the cell inner membrane. It catalyses the reaction Release of signal peptides from bacterial membrane prolipoproteins. Hydrolyzes -Xaa-Yaa-Zaa-|-(S,diacylglyceryl)Cys-, in which Xaa is hydrophobic (preferably Leu), and Yaa (Ala or Ser) and Zaa (Gly or Ala) have small, neutral side chains.. Its pathway is protein modification; lipoprotein biosynthesis (signal peptide cleavage). Its function is as follows. This protein specifically catalyzes the removal of signal peptides from prolipoproteins. The polypeptide is Lipoprotein signal peptidase (Burkholderia cenocepacia (strain HI2424)).